We begin with the raw amino-acid sequence, 110 residues long: Late cornified envelope protein 2D (110 aa).

The protein belongs to the LCE family. Skin-specific. Expression was readily detected in adult trunk skin, adult arm skin, fetal skin, penal skin, vulva, esophagus and tongue. Not expressed in the cervix, rectum, lung, colon, or placenta.

Its function is as follows. Precursors of the cornified envelope of the stratum corneum. The protein is Late cornified envelope protein 2D (LCE2D) of Homo sapiens (Human).